The primary structure comprises 111 residues: Cytochrome c oxidase subunit 7A2-like, mitochondrial (111 aa).

The transit peptide at 1–54 (MYYKFSSFTQKLAGAWASEAYTPQGLKPVSTEAPPIIFATPTKLTSSVTAYDYS) directs the protein to the mitochondrion. Residue Lys68 is modified to N6-acetyllysine. Residues 79–104 (PDQMLYRTTMALTLGGTIYCLIALYM) form a helical membrane-spanning segment.

It belongs to the cytochrome c oxidase VIIa family.

The protein localises to the mitochondrion inner membrane. Non-functional protein. In contrast to the protein found in other strains (AC Q99KD6), cannot induce the assembly of mitochondrial respiratory supercomplexes. The polypeptide is Cytochrome c oxidase subunit 7A2-like, mitochondrial (Mus musculus (Mouse)).